Here is a 403-residue protein sequence, read N- to C-terminus: Histidine--tRNA ligase (403 aa).

This sequence belongs to the class-II aminoacyl-tRNA synthetase family. As to quaternary structure, homodimer.

It localises to the cytoplasm. It carries out the reaction tRNA(His) + L-histidine + ATP = L-histidyl-tRNA(His) + AMP + diphosphate + H(+). The chain is Histidine--tRNA ligase from Sulfurovum sp. (strain NBC37-1).